Reading from the N-terminus, the 617-residue chain is E3 ubiquitin-protein ligase synoviolin (617 aa).

The Cytoplasmic segment spans residues 1 to 4; the sequence is MFRT. Positions 1–84 are necessary and sufficient for SEL1L interaction; sequence MFRTAVMMAA…EHLLERSWYA (84 aa). An involved in FAM8A1 interaction region spans residues 1–251; the sequence is MFRTAVMMAA…LFAIRPMYLA (251 aa). A helical transmembrane segment spans residues 5-25; it reads AVMMAASLALTGAVVAHAYYL. Residues 26 to 41 lie on the Lumenal side of the membrane; the sequence is KHQFYPTVVYLTKSSP. Residues 42-62 traverse the membrane as a helical segment; that stretch reads SMAVLYIQAFVLVFLLGKVMG. The Cytoplasmic portion of the chain corresponds to 63–98; that stretch reads KVFFGQLRAAEMEHLLERSWYAVTETCLAFTVFRDD. Residues 99-119 form a helical membrane-spanning segment; that stretch reads FSPRFVALFTLLLFLKCFHWL. The Lumenal segment spans residues 120–140; it reads AEDRVDFMERSPNISWLFHCR. Residues 141–161 form a helical membrane-spanning segment; it reads IVSLMFLLGILDFLFVSHAYH. The Cytoplasmic segment spans residues 162–169; the sequence is SILTRGAS. A helical membrane pass occupies residues 170–190; it reads VQLVFGFEYAILMTMVLTIFI. Topologically, residues 191–224 are lumenal; that stretch reads KYVLHSVDLQSENPWDNKAVYMLYTELFTGFIKV. Residues 225–245 form a helical membrane-spanning segment; the sequence is LLYMAFMTIMIKVHTFPLFAI. Residues 236–270 are interaction with p53/TP53; that stretch reads KVHTFPLFAIRPMYLAMRQFKKAVTDAIMSRRAIR. The Cytoplasmic portion of the chain corresponds to 246–617; sequence RPMYLAMRQF…LQKLESPVAH (372 aa). Zn(2+)-binding residues include C291, C294, C307, H309, H312, C315, C326, and C329. The RING-type; atypical zinc-finger motif lies at 291 to 330; it reads CIICREEMVTGAKRLPCNHIFHTSCLRSWFQRQQTCPTCR. 3 disordered regions span residues 337-375, 393-453, and 535-617; these read SLPA…GLLP, PVPP…PAPG, and RPAT…PVAH. Pro residues predominate over residues 341-375; that stretch reads QSPPPPEPADQGPPPAPHPPPLLPQPPNFPQGLLP. Positions 417-451 are enriched in low complexity; that stretch reads PSGAATTTAAGTSATAASATASGPGSGSAPEAGPA. Residues 480–535 form an HAF-H domain; necessary to form higher-order Hrd1 complexes region; the sequence is GFAGLTPEELRALEGHERQHLEARLQSLRNIHTLLDAAMLQINQYLTVLASLGPPR. The segment covering 537–569 has biased composition (low complexity); it reads ATSVNSTEETATTVVAAASSTSIPSSEATTPTP. The span at 591 to 600 shows a compositional bias: acidic residues; it reads EMPEDGEPDA. S613 carries the phosphoserine modification.

Belongs to the HRD1 family. Homodimer. Interacts with p53/TP53. Interacts with HTT. Component of the HRD1 complex, which comprises at least SYNV1/HRD1, DERL1/2, FAM8A1, HERPUD1/HERP, OS9, SEL1L and UBE2J1. FAM8A1 is stabilized by interaction with SYNV1, which prevents its proteasomal degradation. OS9 and UBE2J1 recruitment to the complex may be mediated by SEL1L. SYNV1 assembles with SEL1L and FAM8A1 through its transmembrane domains, but interaction with its cytoplasmic domain is required to confer stability to FAM8A1 and enhance recruitment of HERPUD1. The HRD1 complex also associates with VIMP and may transfer misfolded proteins from the endoplasmic reticulum to VCP. May form a complex with ERLEC1, HSPA5, OS9 and SEL1L. Interacts with VCP. Interacts with UBXN6. Interacts with BAG6. Interacts with NFE2L1. Interacts (via N-terminus) with components of the pre-B cell receptor, including IGLL1 and VPREB1. Interacts with CREB3L3; this interaction leads to CREB3L3 ubiquitination and proteasomal degradation. Post-translationally, not N-glycosylated. Auto-ubiquitinated. Deubiquitinated by USP19. In terms of tissue distribution, ubiquitously expressed, with highest levels in liver and kidney (at protein level). Up-regulated in synovial tissues from patients with rheumatoid arthritis (at protein level).

It localises to the endoplasmic reticulum membrane. The enzyme catalyses S-ubiquitinyl-[E2 ubiquitin-conjugating enzyme]-L-cysteine + [acceptor protein]-L-lysine = [E2 ubiquitin-conjugating enzyme]-L-cysteine + N(6)-ubiquitinyl-[acceptor protein]-L-lysine.. It functions in the pathway protein modification; protein ubiquitination. In terms of biological role, E3 ubiquitin-protein ligase which accepts ubiquitin specifically from endoplasmic reticulum-associated UBC7 E2 ligase and transfers it to substrates, promoting their degradation. Component of the endoplasmic reticulum quality control (ERQC) system also called ER-associated degradation (ERAD) involved in ubiquitin-dependent degradation of misfolded endoplasmic reticulum proteins. Also promotes the degradation of normal but naturally short-lived proteins such as SGK. Protects cells from ER stress-induced apoptosis. Protects neurons from apoptosis induced by polyglutamine-expanded huntingtin (HTT) or unfolded GPR37 by promoting their degradation. Sequesters p53/TP53 in the cytoplasm and promotes its degradation, thereby negatively regulating its biological function in transcription, cell cycle regulation and apoptosis. Mediates the ubiquitination and subsequent degradation of cytoplasmic NFE2L1. During the early stage of B cell development, required for degradation of the pre-B cell receptor (pre-BCR) complex, hence supporting further differentiation into mature B cells. This chain is E3 ubiquitin-protein ligase synoviolin, found in Homo sapiens (Human).